The following is a 189-amino-acid chain: UPF0301 protein Cgl3084/cg3414 (189 aa).

This sequence belongs to the UPF0301 (AlgH) family.

The chain is UPF0301 protein Cgl3084/cg3414 from Corynebacterium glutamicum (strain ATCC 13032 / DSM 20300 / JCM 1318 / BCRC 11384 / CCUG 27702 / LMG 3730 / NBRC 12168 / NCIMB 10025 / NRRL B-2784 / 534).